The primary structure comprises 131 residues: Large ribosomal subunit protein uL22c (131 aa).

This sequence belongs to the universal ribosomal protein uL22 family. Part of the 50S ribosomal subunit.

The protein resides in the plastid. In terms of biological role, this protein binds specifically to 23S rRNA. Its function is as follows. The globular domain of the protein is located near the polypeptide exit tunnel on the outside of the subunit, while an extended beta-hairpin is found that lines the wall of the exit tunnel in the center of the 70S ribosome. The chain is Large ribosomal subunit protein uL22c (rpl22) from Aneura mirabilis (Parasitic liverwort).